The chain runs to 366 residues: Ferrochelatase (366 aa).

Fe cation-binding residues include histidine 209 and glutamate 290.

Belongs to the ferrochelatase family.

It localises to the cytoplasm. It catalyses the reaction heme b + 2 H(+) = protoporphyrin IX + Fe(2+). It participates in porphyrin-containing compound metabolism; protoheme biosynthesis; protoheme from protoporphyrin-IX: step 1/1. Its function is as follows. Catalyzes the ferrous insertion into protoporphyrin IX. This is Ferrochelatase from Teredinibacter turnerae (strain ATCC 39867 / T7901).